Here is a 125-residue protein sequence, read N- to C-terminus: Large ribosomal subunit protein uL22 (125 aa).

Belongs to the universal ribosomal protein uL22 family. Part of the 50S ribosomal subunit.

In terms of biological role, this protein binds specifically to 23S rRNA; its binding is stimulated by other ribosomal proteins, e.g. L4, L17, and L20. It is important during the early stages of 50S assembly. It makes multiple contacts with different domains of the 23S rRNA in the assembled 50S subunit and ribosome. Its function is as follows. The globular domain of the protein is located near the polypeptide exit tunnel on the outside of the subunit, while an extended beta-hairpin is found that lines the wall of the exit tunnel in the center of the 70S ribosome. The sequence is that of Large ribosomal subunit protein uL22 from Novosphingobium aromaticivorans (strain ATCC 700278 / DSM 12444 / CCUG 56034 / CIP 105152 / NBRC 16084 / F199).